The chain runs to 163 residues: Small ribosomal subunit protein uS5 (163 aa).

In terms of domain architecture, S5 DRBM spans 8–71; sequence LVEKIVYLNR…ERAKKDMVQI (64 aa).

It belongs to the universal ribosomal protein uS5 family. In terms of assembly, part of the 30S ribosomal subunit. Contacts proteins S4 and S8.

Its function is as follows. With S4 and S12 plays an important role in translational accuracy. Functionally, located at the back of the 30S subunit body where it stabilizes the conformation of the head with respect to the body. In Nitratidesulfovibrio vulgaris (strain DSM 19637 / Miyazaki F) (Desulfovibrio vulgaris), this protein is Small ribosomal subunit protein uS5.